The chain runs to 403 residues: MVAQKSRLLARAFPYLDIFSVFALTPPPQSFGHTPHRRLRWYLMTGYVFYATAILATVFIVSYFNIIAIDEEVLEYNVSDFTRVMGNIQKSLYSIMAIANHLNMLINYRRLGGIYKDIADLEMDMDEASQCFGGQRQRFSFRFRMALCVGVWMILMVGSMPRLTMTAMGPFVSTLLKILTEFVMIMQQLKSLEYCVFVLIIYELVLRLRRTLSQLQEEFQDCEQQDMLQALCVALKRNQLLLGRIWRLEGDVGSYFTPTMLLLFLYNGLTILHMVNWAYINKFLYDSCCQYERFLVCSTLLVNLLLPCLLSQRCINAYNCFPRILHKIRCTSADPNFAMLTRGLREYSLQMEHLKLRFTCGGLFDINLKYFGGLLVTIFGYIIILIQFKVQAIAANRYKKVVN.

Over 1 to 11 (MVAQKSRLLAR) the chain is Cytoplasmic. Residues 12-32 (AFPYLDIFSVFALTPPPQSFG) form a helical membrane-spanning segment. Topologically, residues 33–48 (HTPHRRLRWYLMTGYV) are extracellular. The helical transmembrane segment at 49 to 69 (FYATAILATVFIVSYFNIIAI) threads the bilayer. Residues 70 to 83 (DEEVLEYNVSDFTR) are Cytoplasmic-facing. A helical membrane pass occupies residues 84-104 (VMGNIQKSLYSIMAIANHLNM). The Extracellular portion of the chain corresponds to 105–144 (LINYRRLGGIYKDIADLEMDMDEASQCFGGQRQRFSFRFR). A helical transmembrane segment spans residues 145 to 165 (MALCVGVWMILMVGSMPRLTM). Over 166-191 (TAMGPFVSTLLKILTEFVMIMQQLKS) the chain is Cytoplasmic. Residues 192–212 (LEYCVFVLIIYELVLRLRRTL) traverse the membrane as a helical segment. Over 213 to 259 (SQLQEEFQDCEQQDMLQALCVALKRNQLLLGRIWRLEGDVGSYFTPT) the chain is Extracellular. The chain crosses the membrane as a helical span at residues 260-280 (MLLLFLYNGLTILHMVNWAYI). Residues 281–365 (NKFLYDSCCQ…LRFTCGGLFD (85 aa)) lie on the Cytoplasmic side of the membrane. Residues 366–386 (INLKYFGGLLVTIFGYIIILI) traverse the membrane as a helical segment. The Extracellular portion of the chain corresponds to 387–403 (QFKVQAIAANRYKKVVN).

The protein belongs to the insect chemoreceptor superfamily. Gustatory receptor (GR) family. Gr2a subfamily.

It is found in the cell membrane. In terms of biological role, probable gustatory receptor which mediates acceptance or avoidance behavior, depending on its substrates. This Drosophila melanogaster (Fruit fly) protein is Putative gustatory receptor 98b (Gr98b).